Reading from the N-terminus, the 235-residue chain is tRNA (guanine-N(1)-)-methyltransferase (235 aa).

Residues glycine 112 and 132 to 137 (IGDYVI) contribute to the S-adenosyl-L-methionine site.

This sequence belongs to the RNA methyltransferase TrmD family. Homodimer.

The protein resides in the cytoplasm. It carries out the reaction guanosine(37) in tRNA + S-adenosyl-L-methionine = N(1)-methylguanosine(37) in tRNA + S-adenosyl-L-homocysteine + H(+). Functionally, specifically methylates guanosine-37 in various tRNAs. The polypeptide is tRNA (guanine-N(1)-)-methyltransferase (Anaplasma marginale (strain St. Maries)).